A 1259-amino-acid polypeptide reads, in one-letter code: Trafficking protein particle complex subunit 10 (1259 aa).

S708 is modified (phosphoserine). The segment at 1189–1222 is disordered; it reads LSVDKHGDDQPDSSSLKSRGSVHSACSSEHKGLP.

It belongs to the TRAPPC10 family. As to quaternary structure, specific component of the multisubunit TRAPP II complex, which includes at least TRAPPC1, TRAPPC2, TRAPPC3, TRAPPC4, TRAPPC5, TRAPPC6A/B, TRAPPC9, TRAPPC10 and TRAPPC14. TRAPPC9, TRAPPC10 and TRAPPC14 are specific subunits of the TRAPP II complex. Interacts with TRAPPC14. As to expression, expressed in all tissues examined.

It localises to the golgi apparatus. It is found in the cis-Golgi network. Specific subunit of the TRAPP (transport protein particle) II complex, a highly conserved vesicle tethering complex that functions in late Golgi trafficking as a membrane tether. This is Trafficking protein particle complex subunit 10 (TRAPPC10) from Homo sapiens (Human).